Reading from the N-terminus, the 352-residue chain is Protein NDRG4 (352 aa).

Residues Ser298, Ser317, and Ser323 each carry the phosphoserine modification. The interval 301 to 352 (AVPSASMTRLARSRTASLTSASSVDGSRPQPCTHSDSSEGMGQVNHTMEVSC) is disordered. The segment covering 308-323 (TRLARSRTASLTSASS) has biased composition (low complexity). Residues 330–352 (QPCTHSDSSEGMGQVNHTMEVSC) show a composition bias toward polar residues.

Belongs to the NDRG family. Expressed in the brain and heart, weakly in the kidney; most prominently in postnatal brain where it is expressed widely in the olfactory bulb, cerebral cortex, hippocampus, cerebellum, thalamus, and medulla oblongata.

It is found in the cytoplasm. It localises to the cytosol. In terms of biological role, contributes to the maintenance of intracerebral BDNF levels within the normal range, which is necessary for the preservation of spatial learning and the resistance to neuronal cell death caused by ischemic stress. May enhance growth factor-induced ERK1 and ERK2 phosphorylation, including that induced by NGF. May attenuate NGF-promoted ELK1 phosphorylation in a microtubule-dependent manner. This Rattus norvegicus (Rat) protein is Protein NDRG4 (Ndrg4).